The sequence spans 549 residues: DNA mismatch repair protein MutL (549 aa).

The protein belongs to the DNA mismatch repair MutL/HexB family.

Its function is as follows. This protein is involved in the repair of mismatches in DNA. It is required for dam-dependent methyl-directed DNA mismatch repair. May act as a 'molecular matchmaker', a protein that promotes the formation of a stable complex between two or more DNA-binding proteins in an ATP-dependent manner without itself being part of a final effector complex. This Pseudothermotoga lettingae (strain ATCC BAA-301 / DSM 14385 / NBRC 107922 / TMO) (Thermotoga lettingae) protein is DNA mismatch repair protein MutL.